A 600-amino-acid polypeptide reads, in one-letter code: ATP-dependent lipid A-core flippase (600 aa).

A run of 5 helical transmembrane segments spans residues 28-48 (IMAVLGLITYGAVDAAFIAFI), 80-100 (IMLMAPIAVILMFSLRGVANF), 182-202 (WKLSLCILVIGPIMGVVISVV), 267-287 (ISQPLIMVIGSFALAFVLYAA), and 295-315 (DLTAGTFAAILGAMLAMLQPI). Positions 28–327 (IMAVLGLITY…LTRVNAEFQR (300 aa)) constitute an ABC transmembrane type-1 domain. One can recognise an ABC transporter domain in the interval 359–596 (LAFDNVTFAY…AGIYANLYQM (238 aa)). 393 to 400 (GRSGSGKS) contributes to the ATP binding site.

This sequence belongs to the ABC transporter superfamily. Lipid exporter (TC 3.A.1.106) family. As to quaternary structure, homodimer.

It is found in the cell inner membrane. The enzyme catalyses ATP + H2O + lipid A-core oligosaccharideSide 1 = ADP + phosphate + lipid A-core oligosaccharideSide 2.. Involved in lipopolysaccharide (LPS) biosynthesis. Translocates lipid A-core from the inner to the outer leaflet of the inner membrane. Transmembrane domains (TMD) form a pore in the inner membrane and the ATP-binding domain (NBD) is responsible for energy generation. The chain is ATP-dependent lipid A-core flippase from Shewanella frigidimarina (strain NCIMB 400).